The chain runs to 447 residues: Ribosomal protein uS12 methylthiotransferase RimO (447 aa).

Positions 10–120 (PKVGFVSLGC…VVNAVHDVVP (111 aa)) constitute an MTTase N-terminal domain. The [4Fe-4S] cluster site is built by Cys19, Cys55, Cys84, Cys153, Cys157, and Cys160. The Radical SAM core domain occupies 139-377 (LTPRHYAYLK…MAHQQAISAA (239 aa)). The region spanning 380–447 (QMKIGKEIEV…DEYDLWAEML (68 aa)) is the TRAM domain.

The protein belongs to the methylthiotransferase family. RimO subfamily. The cofactor is [4Fe-4S] cluster.

It is found in the cytoplasm. The catalysed reaction is L-aspartate(89)-[ribosomal protein uS12]-hydrogen + (sulfur carrier)-SH + AH2 + 2 S-adenosyl-L-methionine = 3-methylsulfanyl-L-aspartate(89)-[ribosomal protein uS12]-hydrogen + (sulfur carrier)-H + 5'-deoxyadenosine + L-methionine + A + S-adenosyl-L-homocysteine + 2 H(+). Functionally, catalyzes the methylthiolation of an aspartic acid residue of ribosomal protein uS12. The protein is Ribosomal protein uS12 methylthiotransferase RimO of Pseudomonas savastanoi pv. phaseolicola (strain 1448A / Race 6) (Pseudomonas syringae pv. phaseolicola (strain 1448A / Race 6)).